An 86-amino-acid polypeptide reads, in one-letter code: Progonadoliberin-2 (86 aa).

A signal peptide spans 1–24 (MVSVARLVFMLGPLLCLGAQLSSS). Glutamine 25 is modified (pyrrolidone carboxylic acid). Glycine 34 carries the post-translational modification Glycine amide.

It belongs to the GnRH family.

The protein resides in the secreted. In terms of biological role, stimulates the secretion of gonadotropins. The polypeptide is Progonadoliberin-2 (gnrh2) (Oncorhynchus mykiss (Rainbow trout)).